The sequence spans 256 residues: DNA repair protein RecO (256 aa).

Belongs to the RecO family.

In terms of biological role, involved in DNA repair and RecF pathway recombination. The protein is DNA repair protein RecO of Delftia acidovorans (strain DSM 14801 / SPH-1).